A 1196-amino-acid chain; its full sequence is Probable cation-transporting ATPase 13A4 (1196 aa).

The Cytoplasmic portion of the chain corresponds to 1-31; it reads MGHFEKGQHALLNEGEENEMEIFGYRTQGCR. Residues 32-52 lie within the membrane without spanning it; sequence KSLCLAGSIFSFGILPLVFYW. Topologically, residues 53–197 are cytoplasmic; that stretch reads RPAWHVWAHC…DVEVTPIWKL (145 aa). Residues 198–218 form a helical membrane-spanning segment; the sequence is LIKEVLNPFYIFQLFSVCLWF. Residues 219–223 lie on the Lumenal side of the membrane; sequence SEDYK. The helical transmembrane segment at 224 to 244 threads the bilayer; the sequence is EYAFAIIIMSIISISLTVYDL. Residues 245 to 400 lie on the Cytoplasmic side of the membrane; sequence REQSVKLHHL…NFQLYRDAIR (156 aa). A helical transmembrane segment spans residues 401–421; the sequence is FLLCLVGTATIGMIYTLCVYV. Residues 422–436 are Lumenal-facing; sequence LSGEPPEEVVRKALD. A helical transmembrane segment spans residues 437-457; it reads VITIAVPPALPAALTTGIIYA. Residues 458-900 lie on the Cytoplasmic side of the membrane; it reads QRRLKKRGIF…KEGRAALVTS (443 aa). Aspartate 486 serves as the catalytic 4-aspartylphosphate intermediate. 2 residues coordinate Mg(2+): aspartate 848 and aspartate 852. Residues 901–921 form a helical membrane-spanning segment; sequence FCMFKYMALYSMIQYVGVLLL. Residues 922 to 932 are Lumenal-facing; sequence YWETNSLSNYQ. A helical membrane pass occupies residues 933-953; the sequence is FLFQDLAITTLIGVTMNLNGA. The Cytoplasmic segment spans residues 954–972; sequence YPKLVPFRPAGRLISPPLL. The helical transmembrane segment at 973–993 threads the bilayer; it reads LSVIFNILLSLAMHIAGFILV. The Lumenal portion of the chain corresponds to 994 to 1035; it reads QRQPWYSVEIHSACTVQNESISELTMSPTAPEKMESNSTFTS. A helical transmembrane segment spans residues 1036–1056; sequence FENTTVWFLGTINCITVALVF. The Cytoplasmic segment spans residues 1057–1070; sequence SKGKPFRQPTYTNY. A helical membrane pass occupies residues 1071–1091; that stretch reads IFVLVLIIQLGVCLFILFADI. Residues 1092–1109 lie on the Lumenal side of the membrane; that stretch reads PELYRRLDLLCTPVLWRA. Residues 1110–1130 traverse the membrane as a helical segment; the sequence is SIVIMLSLNFIVSLVAEEAVI. Residues 1131–1196 lie on the Cytoplasmic side of the membrane; that stretch reads ENRALWMMIK…PVFESNEEQL (66 aa).

Belongs to the cation transport ATPase (P-type) (TC 3.A.3) family. Type V subfamily. As to expression, expressed in heart, placenta, liver, skeletal muscles, and pancreas. Lower levels of expression are also detected in brain, lung and kidney. Weakly expressed in the adult brain. Expression in fetal brain is higher than in adult brain, with levels similar to several other fetal tissues including spleen and skeletal muscle. In adult brain expressed at low levels in all tissues examined, including the temporal lobe and putamen. Highly expressed in the respiratory and integumentary systems.

It localises to the early endosome membrane. Its subcellular location is the late endosome membrane. It is found in the recycling endosome membrane. The enzyme catalyses ATP + H2O = ADP + phosphate + H(+). The protein is Probable cation-transporting ATPase 13A4 (ATP13A4) of Homo sapiens (Human).